Reading from the N-terminus, the 110-residue chain is UPF0122 protein BCAH187_A3894 (110 aa).

Belongs to the UPF0122 family.

Functionally, might take part in the signal recognition particle (SRP) pathway. This is inferred from the conservation of its genetic proximity to ftsY/ffh. May be a regulatory protein. The chain is UPF0122 protein BCAH187_A3894 from Bacillus cereus (strain AH187).